The following is a 159-amino-acid chain: MRRLASLAVALPLLAVVASPALAQDMSPRQSAEAFGVPAVSSSWVNQDGSTMTLVFGAGNSVSGFYVNNAPGFGCQGTPYPLVGLTWGNFIGFTVAWDNATANCNSVTSWTGFAEAAGSDVTIVTDWNLAYQGSSSGEIQQGSDTFTLVNKAMKETPKM.

The signal sequence occupies residues 1–23 (MRRLASLAVALPLLAVVASPALA). In terms of domain architecture, Avidin-like spans 36 to 151 (GVPAVSSSWV…GSDTFTLVNK (116 aa)). Asparagine 46, serine 50, tyrosine 66, asparagine 68, and glycine 74 together coordinate biotin. The cysteines at positions 75 and 104 are disulfide-linked. The biotin site is built by serine 106, threonine 108, and aspartate 144.

Belongs to the avidin/streptavidin family. Exhibits a dynamic oligomeric assembly: the apo form self-assembles mostly into toroid-shaped homooctamers, with a small fraction of homodimers, yet upon biotin binding the intact afifavidin consists solely of the dimer.

It is found in the secreted. Functionally, the exact role played by afifavidin is still obscure. Forms a strong non-covalent complex with biotin and 2-iminobiotin. This Afifella pfennigii (Rhodobium pfennigii) protein is Afifavidin.